A 313-amino-acid polypeptide reads, in one-letter code: tRNA-cytidine(32) 2-sulfurtransferase (313 aa).

Residues 47–52 (SGGKDS) carry the PP-loop motif motif. 3 residues coordinate [4Fe-4S] cluster: Cys-122, Cys-125, and Cys-213.

This sequence belongs to the TtcA family. As to quaternary structure, homodimer. Requires Mg(2+) as cofactor. [4Fe-4S] cluster is required as a cofactor.

The protein resides in the cytoplasm. The catalysed reaction is cytidine(32) in tRNA + S-sulfanyl-L-cysteinyl-[cysteine desulfurase] + AH2 + ATP = 2-thiocytidine(32) in tRNA + L-cysteinyl-[cysteine desulfurase] + A + AMP + diphosphate + H(+). Its pathway is tRNA modification. In terms of biological role, catalyzes the ATP-dependent 2-thiolation of cytidine in position 32 of tRNA, to form 2-thiocytidine (s(2)C32). The sulfur atoms are provided by the cysteine/cysteine desulfurase (IscS) system. The protein is tRNA-cytidine(32) 2-sulfurtransferase of Yersinia enterocolitica serotype O:8 / biotype 1B (strain NCTC 13174 / 8081).